A 142-amino-acid polypeptide reads, in one-letter code: Dromaiocalcin-1 (142 aa).

3 disulfide bridges follow: C13-C24, C41-C138, and C113-C130. Positions 20–139 constitute a C-type lectin domain; it reads FRGNCYGYFR…CGERNAFICK (120 aa).

The protein resides in the secreted. It localises to the extracellular space. The protein localises to the extracellular matrix. In Dromaius novaehollandiae (Emu), this protein is Dromaiocalcin-1.